A 296-amino-acid chain; its full sequence is Enoyl-CoA hydratase domain-containing protein 2, mitochondrial (296 aa).

Residues 1–17 (MLRVLPRALRLPCSWRF) constitute a mitochondrion transit peptide. K101 is subject to N6-acetyllysine; alternate. Residue K101 is modified to N6-succinyllysine; alternate.

This sequence belongs to the enoyl-CoA hydratase/isomerase family.

The protein localises to the mitochondrion. In Mus musculus (Mouse), this protein is Enoyl-CoA hydratase domain-containing protein 2, mitochondrial (Echdc2).